The sequence spans 323 residues: Mycothiol acetyltransferase (323 aa).

Residue E44 participates in 1D-myo-inositol 2-(L-cysteinylamino)-2-deoxy-alpha-D-glucopyranoside binding. 2 consecutive N-acetyltransferase domains span residues 77-176 (GQDL…VSLR) and 173-323 (VSLR…VKEG). 98–100 (IAV) is an acetyl-CoA binding site. The 1D-myo-inositol 2-(L-cysteinylamino)-2-deoxy-alpha-D-glucopyranoside site is built by E200, K240, and E253. Acetyl-CoA-binding positions include 257 to 259 (VGV) and 264 to 270 (QGSGLGK). Y291 contributes to the 1D-myo-inositol 2-(L-cysteinylamino)-2-deoxy-alpha-D-glucopyranoside binding site.

Belongs to the acetyltransferase family. MshD subfamily. Monomer.

It catalyses the reaction 1D-myo-inositol 2-(L-cysteinylamino)-2-deoxy-alpha-D-glucopyranoside + acetyl-CoA = mycothiol + CoA + H(+). Its function is as follows. Catalyzes the transfer of acetyl from acetyl-CoA to desacetylmycothiol (Cys-GlcN-Ins) to form mycothiol. This Pseudarthrobacter chlorophenolicus (strain ATCC 700700 / DSM 12829 / CIP 107037 / JCM 12360 / KCTC 9906 / NCIMB 13794 / A6) (Arthrobacter chlorophenolicus) protein is Mycothiol acetyltransferase.